We begin with the raw amino-acid sequence, 180 residues long: ATP-dependent protease subunit HslV (180 aa).

Residue Thr-9 is part of the active site. Ala-164, Cys-167, and Thr-170 together coordinate Na(+).

This sequence belongs to the peptidase T1B family. HslV subfamily. As to quaternary structure, a double ring-shaped homohexamer of HslV is capped on each side by a ring-shaped HslU homohexamer. The assembly of the HslU/HslV complex is dependent on binding of ATP.

The protein localises to the cytoplasm. The catalysed reaction is ATP-dependent cleavage of peptide bonds with broad specificity.. Its activity is regulated as follows. Allosterically activated by HslU binding. Its function is as follows. Protease subunit of a proteasome-like degradation complex believed to be a general protein degrading machinery. The protein is ATP-dependent protease subunit HslV of Leptospira borgpetersenii serovar Hardjo-bovis (strain JB197).